Reading from the N-terminus, the 475-residue chain is Splicing factor U2AF 65 kDa subunit (475 aa).

The segment at 1–90 (MSDFDEFERQ…RHEKKKKVRK (90 aa)) is disordered. Position 2 is an N-acetylserine (Ser-2). Ser-2 carries the post-translational modification Phosphoserine. The tract at residues 2–93 (SDFDEFERQL…KKKKVRKYWD (92 aa)) is required for interaction with PRPF19. Basic and acidic residues predominate over residues 7 to 22 (FERQLNENKQERDKEN). Lys-15 bears the 5-hydroxylysine; by JMJD6; alternate mark. Lys-15 is covalently cross-linked (Glycyl lysine isopeptide (Lys-Gly) (interchain with G-Cter in SUMO2); alternate). Residues 17–47 (ERDKENRHRKRSHSRSRSRDRKRRSRSRDRR) form a necessary and sufficient to stimulate pre-mRNAs 3'-end cleavage in a CFIm complex-dependent manner region. Positions 23-46 (RHRKRSHSRSRSRDRKRRSRSRDR) are enriched in basic residues. Residues 47-56 (RNRDQRSASR) are compositionally biased toward basic and acidic residues. Residue Lys-70 forms a Glycyl lysine isopeptide (Lys-Gly) (interchain with G-Cter in SUMO2); alternate linkage. Lys-70 is subject to N6-acetyllysine; alternate. Residue Ser-79 is modified to Phosphoserine. Basic residues predominate over residues 79–89 (SPRHEKKKKVR). RRM domains lie at 149-231 (RRLY…RPHD), 259-337 (HKLF…RASV), and 385-466 (LPEE…YCDP). Lys-276 bears the 5-hydroxylysine; by JMJD6 mark. Ser-294 is subject to Phosphoserine.

It belongs to the splicing factor SR family. Interacts with U2AF1L4. Heterodimer with U2AF1. Binds unphosphorylated SF1. Interacts with SCAF11 and SNW1. Interacts with ZRSR2/U2AF1-RS2. Interacts with RBM17. Interacts with PRPF19; the interaction is direct. Interacts with POLR2A (via the C-terminal domain); Interacts with PRPF19; the interaction is direct. Interacts with POLR2A (via the C-terminal domain); recruits PRPF19 and the Prp19 complex to the pre-mRNA. Interacts with KHDC4 (Isoform 2). Interacts with ZRSR2. Interacts with the SF3B complex composed of SF3B1, SF3B2, SF3B3, SF3B4, SF3B5, SF3B6 and PHF5A. Interacts (via N-terminus) with CPSF7 (via C-terminus); this interaction stimulates pre-mRNA 3'-end processing by promoting the recruitment of the CFIm complex to cleavage and polyadenylation signals. Interacts with ARGLU1; interaction may be involved in ARGLU1-mediated modulation of alternative splicing. In terms of processing, lysyl-hydroxylation at Lys-15 and Lys-276 affects the mRNA splicing activity of the protein, leading to regulate some, but not all, alternative splicing events.

It localises to the nucleus. Its function is as follows. Plays a role in pre-mRNA splicing and 3'-end processing. By recruiting PRPF19 and the PRP19C/Prp19 complex/NTC/Nineteen complex to the RNA polymerase II C-terminal domain (CTD), and thereby pre-mRNA, may couple transcription to splicing. Required for the export of mRNA out of the nucleus, even if the mRNA is encoded by an intron-less gene. Positively regulates pre-mRNA 3'-end processing by recruiting the CFIm complex to cleavage and polyadenylation signals. The chain is Splicing factor U2AF 65 kDa subunit (U2af2) from Mus musculus (Mouse).